The following is a 105-amino-acid chain: Mini zinc finger protein 1 (105 aa).

Positions 1–29 (MGPQQDRSAAKPYANGSTAAAAAAGRKEN) are disordered. The ZF-HD dimerization-type; degenerate zinc finger occupies 35–84 (YRECQRNHAASIGGHAVDGCREFMASGAEGTAAALLCAACGCHRSFHRRE).

As to quaternary structure, homo- and heterodimers.

It is found in the cytoplasm. Functionally, inhibits zinc finger homeodomain (ZHD) transcription factors, by interacting with them to prevent both their nuclear localization and their DNA-binding properties. The protein is Mini zinc finger protein 1 (MIF1) of Oryza sativa subsp. indica (Rice).